Consider the following 241-residue polypeptide: E3 ubiquitin-protein ligase RNF166 (241 aa).

Residues 8-30 (VASSQHRQHHSHQSLATPSSADS) form a disordered region. The RING-type zinc finger occupies 37 to 77 (CPICLEVYYKPVAIGSCGHTFCGECLQPCLQVSSPLCPLCR). Positions 102, 105, 117, and 121 each coordinate Zn(2+). A C2HC RNF-type zinc finger spans residues 102 to 121 (CRGCSKKVTLAKMRAHISSC). Positions 225–241 (DEEAALQAALALSLSEN) constitute a UIM domain.

It localises to the cytoplasm. It carries out the reaction S-ubiquitinyl-[E2 ubiquitin-conjugating enzyme]-L-cysteine + [acceptor protein]-L-lysine = [E2 ubiquitin-conjugating enzyme]-L-cysteine + N(6)-ubiquitinyl-[acceptor protein]-L-lysine.. Its pathway is protein modification; protein ubiquitination. Functionally, E3 ubiquitin-protein ligase that promotes the ubiquitination of different substrates. The chain is E3 ubiquitin-protein ligase RNF166 (rnf166) from Xenopus laevis (African clawed frog).